The following is a 264-amino-acid chain: Small ribosomal subunit protein uS3 (264 aa).

A KH type-2 domain is found at 39-107 (VREYLKKKLK…PVHVNIEEIR (69 aa)). The tract at residues 217–264 (EEVAEEKRPRRNARPGDRRPRRDGEGAPAGARRGAPRRGGAGDGKTGE) is disordered. Positions 230 to 241 (RPGDRRPRRDGE) are enriched in basic and acidic residues. Over residues 253–264 (RRGGAGDGKTGE) the composition is skewed to gly residues.

It belongs to the universal ribosomal protein uS3 family. As to quaternary structure, part of the 30S ribosomal subunit. Forms a tight complex with proteins S10 and S14.

Functionally, binds the lower part of the 30S subunit head. Binds mRNA in the 70S ribosome, positioning it for translation. This chain is Small ribosomal subunit protein uS3, found in Paraburkholderia phymatum (strain DSM 17167 / CIP 108236 / LMG 21445 / STM815) (Burkholderia phymatum).